Reading from the N-terminus, the 255-residue chain is Ribosomal RNA large subunit methyltransferase E (255 aa).

Gly-50, Trp-52, Asp-68, Asp-84, and Asp-108 together coordinate S-adenosyl-L-methionine. The active-site Proton acceptor is Lys-148. One can recognise a TRAM domain in the interval 195–253 (PVRSGEIYDVTVDSVGRTGDGIAMIQGFAVIVKNASPGERLRIKIGPVKQRFAFASILE).

Belongs to the class I-like SAM-binding methyltransferase superfamily. RNA methyltransferase RlmE family.

It is found in the cytoplasm. The catalysed reaction is uridine(2552) in 23S rRNA + S-adenosyl-L-methionine = 2'-O-methyluridine(2552) in 23S rRNA + S-adenosyl-L-homocysteine + H(+). Specifically methylates the uridine in position 2552 of 23S rRNA at the 2'-O position of the ribose in the fully assembled 50S ribosomal subunit. The chain is Ribosomal RNA large subunit methyltransferase E from Methanothrix thermoacetophila (strain DSM 6194 / JCM 14653 / NBRC 101360 / PT) (Methanosaeta thermophila).